The sequence spans 792 residues: Putative cellulose synthase-like protein H3 (792 aa).

The next 2 helical transmembrane spans lie at 25-45 and 55-75; these read AWML…VRRA and VGGA…FVWL. Residues 132–154 are disordered; it reads GRHVRDDGGPGARAAGGDGEQGA. The segment covering 140–151 has biased composition (gly residues); it reads GPGARAAGGDGE. Active-site residues include Asp-181 and Asp-501. A run of 6 helical transmembrane segments spans residues 579 to 599, 613 to 632, 650 to 670, 706 to 726, 739 to 759, and 768 to 788; these read VWAV…YCLL, FNIT…VEYM, IISA…TIGL, VFIP…IGTW, GPGI…LPFV, and YGIP…FLFC.

Belongs to the glycosyltransferase 2 family. Plant cellulose synthase-like H subfamily.

It localises to the golgi apparatus membrane. Its function is as follows. Thought to be a Golgi-localized beta-glycan synthase that polymerize the backbones of noncellulosic polysaccharides (hemicelluloses) of plant cell wall. The chain is Putative cellulose synthase-like protein H3 (CSLH3) from Oryza sativa subsp. japonica (Rice).